Consider the following 416-residue polypeptide: MLLPLIVFLLSVLIHHRIYSSFFLHFYSPQYYMICSRLTLLSSCSWHDFHLKLILLEFASQSTNPVPALHNDPTYEKISRRFHENPEAFADVFARAWFKLLHRDMGPQTRYLGPEVPEEELIWQDPIPAVDYELTDAEIAELKAKILDSGLTVSDLVTTAWASASTFRGSDMRGGANGARIRLAPQKDWEVNQPEQLTKVLTVLEDIQNQLDKKVSIADLIVLGGSAAIEKSAQDAGFDVTVPFALGRGDATQEQTDIESFEVLEPISDGFRNYQKKQYSVSAEELLLDKAQLLNLTAPEMTVLVDGMRVLGTNYNGTQHGVFTDRVGTLTNDFFVNLLDMGVEWKPMDGGLYEARNRKTGEVVRTATRVDLVFGSNSVLRALVEVYAQDDNKEKFVGDFIAAWIKVMNADRFDLD.

The N-terminal stretch at 1-20 (MLLPLIVFLLSVLIHHRIYS) is a signal peptide.

The protein belongs to the peroxidase family. Peroxidase/catalase subfamily. As to quaternary structure, homodimer or homotetramer. Heme b serves as cofactor. Post-translationally, formation of the three residue Trp-Tyr-Met cross-link is important for the catalase, but not the peroxidase activity of the enzyme.

The catalysed reaction is H2O2 + AH2 = A + 2 H2O. The enzyme catalyses 2 H2O2 = O2 + 2 H2O. Bifunctional enzyme with both catalase and broad-spectrum peroxidase activity. In Alkaliphilus metalliredigens (strain QYMF), this protein is Catalase-peroxidase 2 (katG2).